A 146-amino-acid chain; its full sequence is Hemoglobin subunit beta-1 (146 aa).

Positions 2 to 146 constitute a Globin domain; it reads HWTAEEKQLI…VSHSLARRYH (145 aa). Residues His63 and His92 each coordinate heme b.

Belongs to the globin family. The major hemoglobin component (HbIII) is a tetramer of two alpha-2 chains and two beta-1 chains. In terms of tissue distribution, red blood cells.

Functionally, involved in oxygen transport from the lung to the various peripheral tissues. The protein is Hemoglobin subunit beta-1 (HBB1) of Varanus albigularis (White-throated monitor).